Here is a 182-residue protein sequence, read N- to C-terminus: PRA1 family protein D (182 aa).

N-acetylalanine is present on Ala2. Transmembrane regions (helical) follow at residues Leu68 to Leu88, Ile107 to Leu127, and Ala129 to Thr149. Residues Pro163–Ile182 form a disordered region.

Belongs to the PRA1 family. In terms of assembly, interacts with PRA1F2 and PRA1F3. Interacts with the cauliflower mosaic virus (CaMV) movement protein (via N-terminus). In terms of tissue distribution, expressed in hypocotyls, roots, lateral roots, lateral root caps, columella cells, leaves, shoot apex, stems and flowers.

It localises to the endosome membrane. Its function is as follows. May be involved in both secretory and endocytic intracellular trafficking in the endosomal/prevacuolar compartments. In Arabidopsis thaliana (Mouse-ear cress), this protein is PRA1 family protein D (PRA1D).